Consider the following 327-residue polypeptide: Solute-binding protein SPO1773 (327 aa).

The signal sequence occupies residues 1–26 (MTISFKGLARGVACAALVLAALPAAA). 3-hydroxybenzoate is bound by residues 39 to 41 (HTW), R150, 170 to 172 (RIT), and D211.

This sequence belongs to the bacterial solute-binding protein 7 family. In terms of assembly, the complex is comprised of an extracytoplasmic solute-binding protein and a heteromeric permease formed by two transmembrane proteins.

Its subcellular location is the periplasm. Functionally, solute-binding protein that binds 3,4-dihydroxybenzoate and 3-hydroxybenzoate (in vitro). Probably part of a tripartite ATP-independent periplasmic (TRAP) transport system that mediates solute transport into the cytoplasm. The sequence is that of Solute-binding protein SPO1773 from Ruegeria pomeroyi (strain ATCC 700808 / DSM 15171 / DSS-3) (Silicibacter pomeroyi).